The chain runs to 968 residues: Protein translocase subunit SecA (968 aa).

ATP contacts are provided by residues Gln-99, 117 to 121 (GEGKT), and Asp-631.

Belongs to the SecA family. As to quaternary structure, monomer and homodimer. Part of the essential Sec protein translocation apparatus which comprises SecA, SecYEG and auxiliary proteins SecDF. Other proteins may also be involved.

Its subcellular location is the cell inner membrane. The protein resides in the cytoplasm. It catalyses the reaction ATP + H2O + cellular proteinSide 1 = ADP + phosphate + cellular proteinSide 2.. In terms of biological role, part of the Sec protein translocase complex. Interacts with the SecYEG preprotein conducting channel. Has a central role in coupling the hydrolysis of ATP to the transfer of proteins into and across the cell membrane, serving as an ATP-driven molecular motor driving the stepwise translocation of polypeptide chains across the membrane. The sequence is that of Protein translocase subunit SecA from Chlamydia muridarum (strain MoPn / Nigg).